Here is a 64-residue protein sequence, read N- to C-terminus: Large ribosomal subunit protein bL35 (64 aa).

It belongs to the bacterial ribosomal protein bL35 family.

This chain is Large ribosomal subunit protein bL35, found in Vibrio campbellii (strain ATCC BAA-1116).